A 366-amino-acid polypeptide reads, in one-letter code: ABI gene family member 3 (366 aa).

Residues 33–61 (CEDNYVQATDKRKALEETMAFTTQALASV) adopt a coiled-coil conformation. Positions 161–195 (SRTGTLSRKSIKAPATPASATLGRPPRIPEPVHLP) are disordered. Phosphoserine is present on residues S213 and S216. The interval 215–302 (GSAEGVGGAP…PPPGFGPDEP (88 aa)) is disordered. A compositionally biased stretch (pro residues) spans 232–248 (PPAPPLPSSLDPPPPPA). One can recognise an SH3 domain in the interval 308 to 366 (SYLEKVVTLYPYTSQKDNELSFSEGTVICVTRRYSDGWCEGVSSEGTGFFPGNYVEPSC). Residue S342 is modified to Phosphoserine.

The protein belongs to the ABI family. In terms of assembly, may interact with PAK1 and PAK2. Probably interacts with TARSH. Expressed in heart, lung, liver, pancreas, kidney, placenta and at low levels in brain and skeletal muscle.

Its subcellular location is the cytoplasm. Its function is as follows. May inhibit tumor metastasis. In vitro, reduces cell motility. This chain is ABI gene family member 3 (ABI3), found in Homo sapiens (Human).